A 466-amino-acid chain; its full sequence is Histidine--tRNA ligase (466 aa).

It belongs to the class-II aminoacyl-tRNA synthetase family. As to quaternary structure, homodimer.

It localises to the cytoplasm. The catalysed reaction is tRNA(His) + L-histidine + ATP = L-histidyl-tRNA(His) + AMP + diphosphate + H(+). The chain is Histidine--tRNA ligase (hisS) from Xylella fastidiosa (strain 9a5c).